A 223-amino-acid chain; its full sequence is Urease accessory protein UreF (223 aa).

This sequence belongs to the UreF family. As to quaternary structure, ureD, UreF and UreG form a complex that acts as a GTP-hydrolysis-dependent molecular chaperone, activating the urease apoprotein by helping to assemble the nickel containing metallocenter of UreC. The UreE protein probably delivers the nickel.

It is found in the cytoplasm. Its function is as follows. Required for maturation of urease via the functional incorporation of the urease nickel metallocenter. This chain is Urease accessory protein UreF, found in Agrobacterium fabrum (strain C58 / ATCC 33970) (Agrobacterium tumefaciens (strain C58)).